A 264-amino-acid polypeptide reads, in one-letter code: S-adenosylmethionine decarboxylase proenzyme (264 aa).

The active-site Schiff-base intermediate with substrate; via pyruvic acid is S113. S113 is subject to Pyruvic acid (Ser); by autocatalysis. The active-site Proton acceptor; for processing activity is the H118. The active-site Proton donor; for catalytic activity is C141.

The protein belongs to the prokaryotic AdoMetDC family. Type 2 subfamily. Heterooctamer of four alpha and four beta chains arranged as a tetramer of alpha/beta heterodimers. Pyruvate serves as cofactor. In terms of processing, is synthesized initially as an inactive proenzyme. Formation of the active enzyme involves a self-maturation process in which the active site pyruvoyl group is generated from an internal serine residue via an autocatalytic post-translational modification. Two non-identical subunits are generated from the proenzyme in this reaction, and the pyruvate is formed at the N-terminus of the alpha chain, which is derived from the carboxyl end of the proenzyme. The post-translation cleavage follows an unusual pathway, termed non-hydrolytic serinolysis, in which the side chain hydroxyl group of the serine supplies its oxygen atom to form the C-terminus of the beta chain, while the remainder of the serine residue undergoes an oxidative deamination to produce ammonia and the pyruvoyl group blocking the N-terminus of the alpha chain.

The catalysed reaction is S-adenosyl-L-methionine + H(+) = S-adenosyl 3-(methylsulfanyl)propylamine + CO2. Its pathway is amine and polyamine biosynthesis; S-adenosylmethioninamine biosynthesis; S-adenosylmethioninamine from S-adenosyl-L-methionine: step 1/1. Catalyzes the decarboxylation of S-adenosylmethionine to S-adenosylmethioninamine (dcAdoMet), the propylamine donor required for the synthesis of the polyamines spermine and spermidine from the diamine putrescine. The protein is S-adenosylmethionine decarboxylase proenzyme of Pseudomonas syringae pv. syringae (strain B728a).